We begin with the raw amino-acid sequence, 100 residues long: Elevenin (100 aa).

The N-terminal stretch at 1 to 24 (MALSQKALLVLVLSMLLTASDSWA) is a signal peptide. Cysteine 29 and cysteine 38 form a disulfide bridge. Residues 44–100 (KRGGDSLSVGGSAELDDTLTDPFLKSEEPKEWRELTRLSRVLQTFLSHPTGEMEQHD) constitute a propeptide that is removed on maturation.

The protein belongs to the elevenin family. In terms of assembly, monomer. As to expression, expressed by the venom duct.

It is found in the secreted. Functionally, may mimic the function of prey elevenin neuropeptide. In vivo, intracranial injection in mice induces hyperactivity. The sequence is that of Elevenin from Conus ammiralis (Admiral cone).